Reading from the N-terminus, the 238-residue chain is 14-3-3 family protein artA (238 aa).

This sequence belongs to the 14-3-3 family.

14-3-3 family protein that plays a role in the morphological differentiation and secondary metabolism biosynthesis. Required for normal fungal morphogenesis in an environment-dependent manner, affecting the balance between production of conidiophores and the formation of sclerotia, resistant structures that are necessary for the dissemination and survival. Acts as a positive regulator of conidiation and a negative regulator of sclerotial production. Also regulates the production of secondary metabolites such as aflatoxin, but also the indole-tetramic acid mycotoxin cyclopiazonic acid (CPA) and ustiloxin, an inhibitor of microtubule assembly. The protein is 14-3-3 family protein artA of Aspergillus flavus (strain ATCC 200026 / FGSC A1120 / IAM 13836 / NRRL 3357 / JCM 12722 / SRRC 167).